The chain runs to 286 residues: 4-hydroxybenzoate octaprenyltransferase (286 aa).

A run of 8 helical transmembrane segments spans residues 20-40 (IGTLLLLWPCLMALVLAAGGM), 43-63 (LKVLIIFIIGVVIMRACGCII), 96-116 (LFVILGLAAFGLVLLLNGLVV), 142-162 (FLGVVWSWSIPMAYAAQTGEV), 167-187 (WWLFAANWFWTVAYDTMYAMV), 210-230 (QIIGLFQIAALFCFVAAGWSA), 235-255 (VYGLGLLTFVGFSTYQQMLIF), and 266-286 (FLNNNWAGLVLFVSLGADYLF).

This sequence belongs to the UbiA prenyltransferase family. Mg(2+) serves as cofactor.

Its subcellular location is the cell inner membrane. The enzyme catalyses all-trans-octaprenyl diphosphate + 4-hydroxybenzoate = 4-hydroxy-3-(all-trans-octaprenyl)benzoate + diphosphate. It participates in cofactor biosynthesis; ubiquinone biosynthesis. Its function is as follows. Catalyzes the prenylation of para-hydroxybenzoate (PHB) with an all-trans polyprenyl group. Mediates the second step in the final reaction sequence of ubiquinone-8 (UQ-8) biosynthesis, which is the condensation of the polyisoprenoid side chain with PHB, generating the first membrane-bound Q intermediate 3-octaprenyl-4-hydroxybenzoate. The chain is 4-hydroxybenzoate octaprenyltransferase from Shewanella oneidensis (strain ATCC 700550 / JCM 31522 / CIP 106686 / LMG 19005 / NCIMB 14063 / MR-1).